The primary structure comprises 184 residues: Large ribosomal subunit protein uL5 (184 aa).

The protein belongs to the universal ribosomal protein uL5 family. As to quaternary structure, part of the 50S ribosomal subunit; part of the 5S rRNA/L5/L18/L25 subcomplex. Contacts the 5S rRNA and the P site tRNA. Forms a bridge to the 30S subunit in the 70S ribosome.

Its function is as follows. This is one of the proteins that bind and probably mediate the attachment of the 5S RNA into the large ribosomal subunit, where it forms part of the central protuberance. In the 70S ribosome it contacts protein S13 of the 30S subunit (bridge B1b), connecting the 2 subunits; this bridge is implicated in subunit movement. Contacts the P site tRNA; the 5S rRNA and some of its associated proteins might help stabilize positioning of ribosome-bound tRNAs. In Thermotoga sp. (strain RQ2), this protein is Large ribosomal subunit protein uL5.